Here is a 310-residue protein sequence, read N- to C-terminus: MVKVYAPASSANMSVGFDVLGAAVAPVDGALLGDVVTVEAAETFSLNNLGRFADKLPSEPRENIVYQCWERFCQELGKQIPVAMTLEKNMPIGSGLGSSACSVVAALMAMNEHCGKPLNDTRLLALMGELEGRISGSIHYDNVAPCFLGGMQLMIEENDIISQQVPGFDEWLWVLAYPGIKVSTAEARAILPAQYRRQDCIAHGRHLAGFIHACYSRQPELAAKLMKDVIAEPYRERLLPGFRQARQAVAEIGAVASGISGSGPTLFALCDKPDTAQRVADWLGKNYLQNQEGFVHICRLDTAGARVLEN.

ATP is bound at residue 91–101 (PIGSGLGSSAC).

It belongs to the GHMP kinase family. Homoserine kinase subfamily.

It is found in the cytoplasm. The enzyme catalyses L-homoserine + ATP = O-phospho-L-homoserine + ADP + H(+). It functions in the pathway amino-acid biosynthesis; L-threonine biosynthesis; L-threonine from L-aspartate: step 4/5. Functionally, catalyzes the ATP-dependent phosphorylation of L-homoserine to L-homoserine phosphate. The sequence is that of Homoserine kinase from Shigella flexneri serotype 5b (strain 8401).